The following is a 391-amino-acid chain: Formate-dependent phosphoribosylglycinamide formyltransferase (391 aa).

N(1)-(5-phospho-beta-D-ribosyl)glycinamide is bound by residues 20-21 and E80; that span reads EL. ATP-binding positions include R112, K153, 158–163, 193–196, and E201; these read SSGKGQ and EGFI. Residues 117–306 enclose the ATP-grasp domain; that stretch reads RLAAETLGLP…EFALHVRAIL (190 aa). E265 and E277 together coordinate Mg(2+). N(1)-(5-phospho-beta-D-ribosyl)glycinamide is bound by residues D284, K354, and 361 to 362; that span reads RR.

This sequence belongs to the PurK/PurT family. As to quaternary structure, homodimer.

It catalyses the reaction N(1)-(5-phospho-beta-D-ribosyl)glycinamide + formate + ATP = N(2)-formyl-N(1)-(5-phospho-beta-D-ribosyl)glycinamide + ADP + phosphate + H(+). It participates in purine metabolism; IMP biosynthesis via de novo pathway; N(2)-formyl-N(1)-(5-phospho-D-ribosyl)glycinamide from N(1)-(5-phospho-D-ribosyl)glycinamide (formate route): step 1/1. Involved in the de novo purine biosynthesis. Catalyzes the transfer of formate to 5-phospho-ribosyl-glycinamide (GAR), producing 5-phospho-ribosyl-N-formylglycinamide (FGAR). Formate is provided by PurU via hydrolysis of 10-formyl-tetrahydrofolate. This is Formate-dependent phosphoribosylglycinamide formyltransferase from Shewanella oneidensis (strain ATCC 700550 / JCM 31522 / CIP 106686 / LMG 19005 / NCIMB 14063 / MR-1).